The following is a 197-amino-acid chain: Mediator of RNA polymerase II transcription subunit 21 (197 aa).

Residues P37–T112 are disordered. Low complexity-rich tracts occupy residues P60 to G70 and P90 to P100. Residues G140–L183 are a coiled coil.

The protein belongs to the Mediator complex subunit 21 family. In terms of assembly, component of the Mediator complex.

The protein resides in the nucleus. Functionally, component of the Mediator complex, a coactivator involved in the regulated transcription of nearly all RNA polymerase II-dependent genes. Mediator functions as a bridge to convey information from gene-specific regulatory proteins to the basal RNA polymerase II transcription machinery. Mediator is recruited to promoters by direct interactions with regulatory proteins and serves as a scaffold for the assembly of a functional preinitiation complex with RNA polymerase II and the general transcription factors. The polypeptide is Mediator of RNA polymerase II transcription subunit 21 (SRB7) (Coccidioides immitis (strain RS) (Valley fever fungus)).